We begin with the raw amino-acid sequence, 203 residues long: Pyridoxine/pyridoxamine 5'-phosphate oxidase (203 aa).

FMN is bound by residues 50-55 (RMVLLK), 65-66 (YT), Lys72, and Gln94. Lys55 contributes to the substrate binding site. Substrate is bound by residues Tyr112, Arg116, and Ser120. Residues 129 to 130 (QS) and Trp174 each bind FMN. 180–182 (RLH) serves as a coordination point for substrate. Arg184 serves as a coordination point for FMN.

This sequence belongs to the pyridoxamine 5'-phosphate oxidase family. In terms of assembly, homodimer. Requires FMN as cofactor.

The catalysed reaction is pyridoxamine 5'-phosphate + O2 + H2O = pyridoxal 5'-phosphate + H2O2 + NH4(+). The enzyme catalyses pyridoxine 5'-phosphate + O2 = pyridoxal 5'-phosphate + H2O2. Its pathway is cofactor metabolism; pyridoxal 5'-phosphate salvage; pyridoxal 5'-phosphate from pyridoxamine 5'-phosphate: step 1/1. The protein operates within cofactor metabolism; pyridoxal 5'-phosphate salvage; pyridoxal 5'-phosphate from pyridoxine 5'-phosphate: step 1/1. Its function is as follows. Catalyzes the oxidation of either pyridoxine 5'-phosphate (PNP) or pyridoxamine 5'-phosphate (PMP) into pyridoxal 5'-phosphate (PLP). In Brucella anthropi (strain ATCC 49188 / DSM 6882 / CCUG 24695 / JCM 21032 / LMG 3331 / NBRC 15819 / NCTC 12168 / Alc 37) (Ochrobactrum anthropi), this protein is Pyridoxine/pyridoxamine 5'-phosphate oxidase.